A 152-amino-acid polypeptide reads, in one-letter code: Endoribonuclease YbeY (152 aa).

Histidine 113, histidine 117, and histidine 123 together coordinate Zn(2+).

Belongs to the endoribonuclease YbeY family. The cofactor is Zn(2+).

The protein resides in the cytoplasm. In terms of biological role, single strand-specific metallo-endoribonuclease involved in late-stage 70S ribosome quality control and in maturation of the 3' terminus of the 16S rRNA. In Pseudoalteromonas atlantica (strain T6c / ATCC BAA-1087), this protein is Endoribonuclease YbeY.